The following is a 190-amino-acid chain: MARANEIKRGMVVNYNDKLLLVKDIDVQSPSARGASTLYKMRFSDVRTGLKVEERFKGDDIIDTITLTRRTVTFSYIDGDEYVFMDDEDYAPYLFKKDQIEEELLFIPEGGMPGIQVLSWDGQIIALELPQTVDLEIIETAPGIKGASASSRNKPATMSTGLVIPVPEYLSAGEKIRIHIPERRYMGRAD.

The protein belongs to the elongation factor P family.

The sequence is that of Elongation factor P-like protein from Pectobacterium atrosepticum (strain SCRI 1043 / ATCC BAA-672) (Erwinia carotovora subsp. atroseptica).